We begin with the raw amino-acid sequence, 303 residues long: MAGLRQIAFYGKGGIGKSTTSQNTLAAMAYYFGKKILIVGCDPKADSTRLILHEKAQSTIMQLAAEVGTVEDLELEDVCKPGAGPFNPEQPSPSGGWIKCAESGGPEPGVGCAGRGVITAINFLEEEGAYSDELDFVSYDVLGDVVCGGFAMPIREGKAQEIYIVMSGEMMAMYAANNISRGILKYASSGGVRLAGLICNARMTDREYDLANALATKLGTQMIHFVPRHNIVQHAELRRMTVVEYAETSTQAEEYKELARKIVHNDLKVIPTPMNMDDLESLLMEFGIAEQFDEENVGKKAEA.

Residue 11-18 (GKGGIGKS) participates in ATP binding. Cysteine 112 lines the [4Fe-4S] cluster pocket. Arginine 115 bears the ADP-ribosylarginine; by dinitrogenase reductase ADP-ribosyltransferase mark. Residue cysteine 147 participates in [4Fe-4S] cluster binding.

Belongs to the NifH/BchL/ChlL family. As to quaternary structure, homodimer. Requires [4Fe-4S] cluster as cofactor. In terms of processing, the reversible ADP-ribosylation of Arg-115 inactivates the nitrogenase reductase and regulates nitrogenase activity.

It catalyses the reaction N2 + 8 reduced [2Fe-2S]-[ferredoxin] + 16 ATP + 16 H2O = H2 + 8 oxidized [2Fe-2S]-[ferredoxin] + 2 NH4(+) + 16 ADP + 16 phosphate + 6 H(+). The key enzymatic reactions in nitrogen fixation are catalyzed by the nitrogenase complex, which has 2 components: the iron protein and the molybdenum-iron protein. The chain is Nitrogenase iron protein from Wolinella succinogenes (strain ATCC 29543 / DSM 1740 / CCUG 13145 / JCM 31913 / LMG 7466 / NCTC 11488 / FDC 602W) (Vibrio succinogenes).